Reading from the N-terminus, the 405-residue chain is Accessory Sec system protein translocase subunit SecY2 (405 aa).

A run of 10 helical transmembrane segments spans residues 14–34, 65–85, 104–124, 131–151, 156–176, 191–211, 247–267, 285–305, 343–363, and 368–388; these read LFTSFLLFIYVLGSRIILPFV, IFSVGLSPWMSAMILWQMFSF, MYLTLLIAVIQSLAVSLRLPV, ILVVLMNTILLIAGTFFLVWL, ASMGIGGSIVILLSSMVLNIP, GIIVLLALLTLVFSYLLALMY, MYVMSFLSVPAYLFILLGFIF, PLWVYVYISVLFLFSIIFAFV, FSVIGGLFNVIMAGGPMLFVL, and LLRLAMIPGLFMMFGGMIFTI.

This sequence belongs to the SecY/SEC61-alpha family. SecY2 subfamily. In terms of assembly, component of the accessory SecA2/SecY2 protein translocase complex required to export cell wall proteins. May form heterotrimers with SecE and SecG subunits.

It is found in the cell membrane. Its function is as follows. Part of the accessory SecA2/SecY2 system specifically required for export of possible cell wall proteins. The central subunit of a protein translocation channel. The chain is Accessory Sec system protein translocase subunit SecY2 from Streptococcus pneumoniae serotype 4 (strain ATCC BAA-334 / TIGR4).